Consider the following 137-residue polypeptide: Large ribosomal subunit protein uL16 (137 aa).

It belongs to the universal ribosomal protein uL16 family. As to quaternary structure, part of the 50S ribosomal subunit.

Functionally, binds 23S rRNA and is also seen to make contacts with the A and possibly P site tRNAs. The polypeptide is Large ribosomal subunit protein uL16 (Rhizobium meliloti (strain 1021) (Ensifer meliloti)).